The sequence spans 129 residues: Small ribosomal subunit protein bS6 (129 aa).

The protein belongs to the bacterial ribosomal protein bS6 family.

In terms of biological role, binds together with bS18 to 16S ribosomal RNA. The polypeptide is Small ribosomal subunit protein bS6 (Pelobacter propionicus (strain DSM 2379 / NBRC 103807 / OttBd1)).